A 200-amino-acid polypeptide reads, in one-letter code: General odorant-binding protein 70 (200 aa).

An N-terminal signal peptide occupies residues 1–29; the sequence is MRRQYSMWASTVAVIACGSALMLLHPVGA. 2 cysteine pairs are disulfide-bonded: Cys105–Cys174 and Cys152–Cys183.

Belongs to the PBP/GOBP family.

The protein resides in the secreted. In terms of biological role, present in the aqueous fluid surrounding olfactory sensory dendrites and are thought to aid in the capture and transport of hydrophobic odorants into and through this fluid. In Anopheles gambiae (African malaria mosquito), this protein is General odorant-binding protein 70 (Obp70).